Here is a 182-residue protein sequence, read N- to C-terminus: Protein Syd (182 aa).

This sequence belongs to the Syd family.

The protein localises to the cell inner membrane. In terms of biological role, interacts with the SecY protein in vivo. May bind preferentially to an uncomplexed state of SecY, thus functioning either as a chelating agent for excess SecY in the cell or as a regulatory factor that negatively controls the translocase function. The chain is Protein Syd from Aeromonas salmonicida (strain A449).